The chain runs to 945 residues: Splicing factor, suppressor of white-apricot homolog (945 aa).

2 disordered regions span residues 1-28 and 156-185; these read MYGA…GTGT and DYYD…EENE. Composition is skewed to basic and acidic residues over residues 9–21 and 169–178; these read AKPE…KEEA and PSKQREKNEA. Residues 211-253 form an SURP motif 1 repeat; it reads IIERTANFVCKQGAQFEIMLKAKQARNSQFDFLRFDHYLNPYY. The tract at residues 271-301 is disordered; it reads SKNEEKKKSGPTSDNEEEDDEEDGSYLHPSL. Ser-283 carries the post-translational modification Phosphoserine. A compositionally biased stretch (acidic residues) spans 284-294; that stretch reads DNEEEDDEEDG. Residue Lys-315 is modified to N6-acetyllysine. 2 disordered regions span residues 332–355 and 403–448; these read KAQA…PSQV and SSSP…PVAI. Residues 335–352 are compositionally biased toward low complexity; sequence ADSSAPAPPTADGTPAQP. The span at 412-426 shows a compositional bias: pro residues; sequence VPPPPGTTPPPPPTT. Low complexity predominate over residues 427-447; the sequence is AEPSSGVTSTTTTTSALAPVA. One copy of the SURP motif 2 repeat lies at 458 to 498; the sequence is VIDKLAEYVARNGLKFETSVRAKNDQRFEFLQPWHQYNAYY. Disordered stretches follow at residues 512–564, 589–680, and 712–921; these read GSTQ…KSTV, PLEK…QAER, and DTGV…VQSK. Low complexity predominate over residues 514–527; the sequence is TQAASTAEEAPTET. The segment covering 528 to 540 has biased composition (acidic residues); sequence AVEESGEAGEDGA. Positions 589–598 are enriched in basic and acidic residues; it reads PLEKNRVKLD. A phosphoserine mark is found at Ser-601 and Ser-621. Low complexity predominate over residues 615–630; that stretch reads SSVANPSPAAAPPSVA. Residues 632–686 are a coiled coil; that stretch reads EEKKPQLTQEELEAKQAKQKLEDRLAAAAREKLAQASKESKEKQLQAERKRKAAL. Thr-639 carries the post-translational modification Phosphothreonine. 2 stretches are compositionally biased toward basic and acidic residues: residues 643-679 and 733-752; these read LEAK…LQAE and KPPE…EERE. Composition is skewed to basic residues over residues 753-787 and 795-810; these read KKKK…KAKH and TVRR…RRRA. Over residues 811–821 the composition is skewed to basic and acidic residues; it reads HSPERRREERS. A phosphoserine mark is found at Ser-829 and Ser-831. Over residues 835–861 the composition is skewed to basic residues; that stretch reads SRKRTRSRSPHEKKKKRRSRSRTKAKA. Low complexity predominate over residues 871-894; that stretch reads QAAQRPSAHSAHSASISPVESRGS. Over residues 895-908 the composition is skewed to basic and acidic residues; it reads SQERSRGVSQEKDG. Residues Ser-899 and Ser-903 each carry the phosphoserine modification. Residues 909–920 are compositionally biased toward low complexity; it reads QISSAIVSSVQS.

It is found in the nucleus. Its function is as follows. Plays a role as an alternative splicing regulator. Regulates its own expression at the level of RNA processing. Also regulates the splicing of fibronectin and CD45 genes. May act, at least in part, by interaction with other R/S-containing splicing factors. Represses the splicing of MAPT/Tau exon 10. The sequence is that of Splicing factor, suppressor of white-apricot homolog (Sfswap) from Mus musculus (Mouse).